We begin with the raw amino-acid sequence, 498 residues long: Aldehyde dehydrogenase, mitochondrial (498 aa).

A mitochondrion-targeting transit peptide spans 1–9 (MLRATLARL). 242–247 (GSTAVG) provides a ligand contact to NAD(+). Residue E265 is the Proton acceptor of the active site. C299 serves as the catalytic Nucleophile.

This sequence belongs to the aldehyde dehydrogenase family.

The protein localises to the mitochondrion. The enzyme catalyses an aldehyde + NAD(+) + H2O = a carboxylate + NADH + 2 H(+). The protein operates within alcohol metabolism; ethanol degradation; acetate from ethanol: step 2/2. Could have an RNA-binding activity in addition of its catalytic role. In Leishmania tarentolae (Sauroleishmania tarentolae), this protein is Aldehyde dehydrogenase, mitochondrial (ALDH2).